Here is a 325-residue protein sequence, read N- to C-terminus: Foldase protein PrsA (325 aa).

The first 20 residues, 1–20, serve as a signal peptide directing secretion; sequence MKLMNKIIVPVTASALLLGA. Cys21 is lipidated: N-palmitoyl cysteine. Cys21 is lipidated: S-diacylglycerol cysteine. In terms of domain architecture, PpiC spans 139-245; it reads ENSKKASHIL…YGYHIIKADK (107 aa). Disordered stretches follow at residues 159-202 and 303-325; these read EGLS…KKDG and PDKI…NSGS.

It belongs to the PrsA family.

It localises to the cell membrane. It carries out the reaction [protein]-peptidylproline (omega=180) = [protein]-peptidylproline (omega=0). Its function is as follows. Plays a major role in protein secretion by helping the post-translocational extracellular folding of several secreted proteins. This chain is Foldase protein PrsA, found in Staphylococcus epidermidis (strain ATCC 12228 / FDA PCI 1200).